The sequence spans 255 residues: 1-(5-phosphoribosyl)-5-[(5-phosphoribosylamino)methylideneamino] imidazole-4-carboxamide isomerase (255 aa).

The Proton acceptor role is filled by D8. The active-site Proton donor is the D129.

This sequence belongs to the HisA/HisF family.

Its subcellular location is the cytoplasm. It carries out the reaction 1-(5-phospho-beta-D-ribosyl)-5-[(5-phospho-beta-D-ribosylamino)methylideneamino]imidazole-4-carboxamide = 5-[(5-phospho-1-deoxy-D-ribulos-1-ylimino)methylamino]-1-(5-phospho-beta-D-ribosyl)imidazole-4-carboxamide. The protein operates within amino-acid biosynthesis; L-histidine biosynthesis; L-histidine from 5-phospho-alpha-D-ribose 1-diphosphate: step 4/9. In Prochlorococcus marinus subsp. pastoris (strain CCMP1986 / NIES-2087 / MED4), this protein is 1-(5-phosphoribosyl)-5-[(5-phosphoribosylamino)methylideneamino] imidazole-4-carboxamide isomerase.